The following is a 209-amino-acid chain: DNA transformation protein TfoX1 (209 aa).

Belongs to the Sxy/TfoX family.

Functionally, required for DNA transformation jointly with TfoY (tfoX2). The chain is DNA transformation protein TfoX1 from Aliivibrio fischeri (strain ATCC 700601 / ES114) (Vibrio fischeri).